The following is a 283-amino-acid chain: Nucleoid occlusion protein (283 aa).

Positions 1 to 21 (MKHSFSRFFGFGEKEEEPEIA) are disordered. The segment at residues 148–167 (EALAQRLGKGQSTIANKLRL) is a DNA-binding region (H-T-H motif).

This sequence belongs to the ParB family.

Its subcellular location is the cytoplasm. It localises to the nucleoid. Its function is as follows. Effects nucleoid occlusion by binding relatively nonspecifically to DNA and preventing the assembly of the division machinery in the vicinity of the nucleoid, especially under conditions that disturb the cell cycle. It helps to coordinate cell division and chromosome segregation by preventing the formation of the Z ring through the nucleoid, which would cause chromosome breakage. The chain is Nucleoid occlusion protein from Bacillus velezensis (strain DSM 23117 / BGSC 10A6 / LMG 26770 / FZB42) (Bacillus amyloliquefaciens subsp. plantarum).